The chain runs to 400 residues: MKGSLLLAGATLLGCTSAKLHSLKLKKVSLKEQLEHADIDVQIKSLGQKYMGIRPEQHEQQMFKEQTPIEAESGHNVLIDNFLNAQYFSEISIGTPPQTFKVVLDTGSSNLWVPGKDCSSIACFLHSTYDSSASSTYSKNGTKFAIRYGSGSLEGFVSQDSVKIGDMTIKNQLFAEATSEPGLAFAFGRFDGIMGMGFSSISVNGITPPFYNMIDQGLIDEPVFSFYLGDTNKEGDQSVVTFGGSDTKHFTGDMTTIPLRRKAYWEVDFDAISLGEDTAALENTGIILDTGTSLIALPTTLAEMINTQIGATKSWNGQYTLDCAKRDSLPDVTFTVSGHNFTIGPHDYTLEVSGTCISSFMGMDFPEPVGPLAILGDSFLRRYYSVYDLGKGTVGLAKAK.

The first 18 residues, 1 to 18, serve as a signal peptide directing secretion; it reads MKGSLLLAGATLLGCTSA. Positions 19 to 72 are cleaved as a propeptide — activation peptide; that stretch reads KLHSLKLKKVSLKEQLEHADIDVQIKSLGQKYMGIRPEQHEQQMFKEQTPIEAE. The 311-residue stretch at 87 to 397 folds into the Peptidase A1 domain; it reads YFSEISIGTP…DLGKGTVGLA (311 aa). Residue aspartate 105 is part of the active site. A disulfide bridge connects residues cysteine 118 and cysteine 123. Asparagine 140 carries N-linked (GlcNAc...) asparagine glycosylation. The active site involves aspartate 289. Cysteine 323 and cysteine 356 are oxidised to a cystine. Residue asparagine 340 is glycosylated (N-linked (GlcNAc...) asparagine).

Belongs to the peptidase A1 family.

Its subcellular location is the vacuole lumen. The protein localises to the secreted. The catalysed reaction is Hydrolysis of proteins with broad specificity for peptide bonds. Cleaves -Leu-Leu-|-Val-Tyr- bond in a synthetic substrate. Does not act on esters of Tyr or Arg.. Its function is as follows. Vacuolar aspartic endopeptidase which is probably also secreted and contributes to virulence. The sequence is that of Probable vacuolar protease A (PEP2) from Trichophyton verrucosum (strain HKI 0517).